Here is a 370-residue protein sequence, read N- to C-terminus: MKKGFSLPLWVAGAARSALKKLVGLPFDNYELIKIPNEKKEIKIEIHSVGLLKDDSHALGISFAKSGLYLDITQNLEIWTIASLERNSFNNPLQTNPINIIAGSGVGIKEDTSEICISDFAKEVLYENLLDIIPEGFNLKLEIIFPNGVFLAERTSNKSFGIVDGLSIIGTSAETYSSASPDQLEEAKTNLAKLVQNDFKGKVVFVIGENGLNLAKNCNLKFPILKVGNWIGPLIVDAAIKKVKTVILFGYHGKLIKLAGGIFHTHNHLADGRIEILVYLAVQEKVPTEIIVQLSHLKNLEEALLLLERFDKSIAEKLFLNLSNTIEKRSFTYVNRYVKTDMEIASIIFDRKREIRWAGTYGNKYISDFQ.

It belongs to the CbiD family.

The enzyme catalyses Co-precorrin-5B + S-adenosyl-L-methionine = Co-precorrin-6A + S-adenosyl-L-homocysteine. The protein operates within cofactor biosynthesis; adenosylcobalamin biosynthesis; cob(II)yrinate a,c-diamide from sirohydrochlorin (anaerobic route): step 6/10. Functionally, catalyzes the methylation of C-1 in cobalt-precorrin-5B to form cobalt-precorrin-6A. The sequence is that of Cobalt-precorrin-5B C(1)-methyltransferase from Prochlorococcus marinus (strain MIT 9312).